Consider the following 358-residue polypeptide: Probable (S)-tetrahydroprotoberberine N-methyltransferase 2 (358 aa).

Positions 98, 136, 160, 164, 186, 187, and 202 each coordinate S-adenosyl-L-methionine. C333 is a catalytic residue.

Belongs to the CFA/CMAS family. In terms of assembly, homodimer.

Its subcellular location is the cytoplasm. It catalyses the reaction (S)-stylopine + S-adenosyl-L-methionine = (S)-cis-N-methylstylopine + S-adenosyl-L-homocysteine. It carries out the reaction (S)-tetrahydropalmatine + S-adenosyl-L-methionine = (S)-cis-N-methyltetrahydropalmatine + S-adenosyl-L-homocysteine. The protein operates within alkaloid biosynthesis. N-methyltransferase with a strict substrate specificity for (R,S)-tetrahydropalmatine or (R,S)-stylopine. The sequence is that of Probable (S)-tetrahydroprotoberberine N-methyltransferase 2 from Papaver bracteatum (Great scarlet poppy).